The chain runs to 77 residues: DinI-like protein in retron Ec67 (77 aa).

It belongs to the DinI family.

This chain is DinI-like protein in retron Ec67, found in Escherichia coli.